The following is a 454-amino-acid chain: MYTYMEYLQKCFYKSTNWNEDNIFSNITATSQAILEFPIPNGFKIDSSSKTTDYSASSFTLSNNHQINGSLAYLYSSVPLKNTMGTKDVSLQDAIAGFRIIEPMVRLQPKFNNKAPHSKSSLLYGRMYFPGSALEAMIIKRISENTQLLIKCVNNPHLSKNGTMIVYLQNNTAKYSREFIYSTNESLIGLRCLYNLGTPTSSSTVSSFNPRTIPKFDNSVVSIGTELWFATRSMSPGLSGALRYSTRSTSTGKPLTMTLAINPILGHISSTYTVKTSVASTFCSRYDFNVFSYASNLSLGFELYSYANKKRSDFYNHEIYSSSEENKYLKQHPELQKHHRVPIRAYKHHDNRTIINPIHNLDNVYHINPTLLSTTSGSGHTSETVTTAFQNLVNESDFSSVLKFSTSLNDKVVKILWEGRLRDFLVSTGVKLSLNPVTNTPEFNKLGISFSYAL.

Belongs to the MDM10 family. In terms of assembly, component of the ER-mitochondria encounter structure (ERMES) or MDM complex, composed of MMM1, MDM10, MDM12 and MDM34. Associates with the mitochondrial outer membrane sorting assembly machinery SAM(core) complex.

The protein resides in the mitochondrion outer membrane. Its function is as follows. Component of the ERMES/MDM complex, which serves as a molecular tether to connect the endoplasmic reticulum and mitochondria. Components of this complex are involved in the control of mitochondrial shape and protein biogenesis and may function in phospholipid exchange. MDM10 is involved in the late assembly steps of the general translocase of the mitochondrial outer membrane (TOM complex). Functions in the TOM40-specific route of the assembly of outer membrane beta-barrel proteins, including the association of TOM40 with the receptor TOM22 and small TOM proteins. Can associate with the SAM(core) complex as well as the MDM12-MMM1 complex, both involved in late steps of the major beta-barrel assembly pathway, that is responsible for biogenesis of all outer membrane beta-barrel proteins. May act as a switch that shuttles between both complexes and channels precursor proteins into the TOM40-specific pathway. Plays a role in mitochondrial morphology and in the inheritance of mitochondria. In Candida tropicalis (strain ATCC MYA-3404 / T1) (Yeast), this protein is Mitochondrial distribution and morphology protein 10.